Reading from the N-terminus, the 120-residue chain is Testis-expressed protein 48 (120 aa).

The span at 29–45 (KVPSQTQEHKPSTQNLL) shows a compositional bias: polar residues. Residues 29–86 (KVPSQTQEHKPSTQNLLLQKDELDRQNPKRINAVSHLPSRTPLIQTKKSTSSSSSEFE) are disordered. A compositionally biased stretch (low complexity) spans 74–83 (TKKSTSSSSS).

In Homo sapiens (Human), this protein is Testis-expressed protein 48.